A 272-amino-acid chain; its full sequence is Protein UL11 (272 aa).

An N-terminal signal peptide occupies residues 1–31 (MLFRYITFHREKVLYLTAACIFGVYISLHDA). Over 32–224 (CIPVVGKIGT…PLQPSPQHQH (193 aa)) the chain is Extracellular. N42, N93, N100, and N142 each carry an N-linked (GlcNAc...) asparagine; by host glycan. The segment at 142–200 (NGTFPTTTTKKPTTTTRTTTTTTQRTTTTRTTTTAKKTTISTTHHKHPSPKKSTTPNSH) is disordered. The segment covering 147–183 (TTTTKKPTTTTRTTTTTTQRTTTTRTTTTAKKTTIST) has biased composition (low complexity). The helical transmembrane segment at 225-245 (LATHALWVLAVVIVIIIIIIF) threads the bilayer. The Cytoplasmic segment spans residues 246-272 (YFRIPQKLWLLWQHDKHGIVLIPQTDL).

This sequence belongs to the RL11 family. In terms of assembly, interacts with host PTPRC; this interaction affects T-cell signaling. In terms of processing, glycosylated.

The protein resides in the host cell membrane. The protein localises to the host endoplasmic reticulum. Functionally, plays a role in the modulation of host immune response by modulating T-cell function. Interacts with host PTPRC/CD45 and thereby reduces host TCR signaling and T-cell proliferation. The protein is Protein UL11 (UL11) of Human cytomegalovirus (strain Merlin) (HHV-5).